Here is a 514-residue protein sequence, read N- to C-terminus: Deoxynucleoside triphosphate triphosphohydrolase SAMHD1 homolog (514 aa).

Positions 1–24 (MNNTFKYVNEDVSGTEGEESDYDP) are disordered. Residue Lys-80 coordinates GTP. Asn-83 provides a ligand contact to a 2'-deoxyribonucleoside 5'-triphosphate. Residue 101 to 109 (DTEQFQRLR) coordinates GTP. Substrate-binding residues include Gln-113 and Arg-128. The 132-residue stretch at 128–259 (RFEHSIGVSH…SVDVDKFDYL (132 aa)) folds into the HD domain. Zn(2+)-binding residues include His-131, His-170, and Asp-171. Position 174 (His-174) interacts with substrate. The active site involves His-196. Residues 252–258 (DVDKFDY), Tyr-258, and Asp-262 each bind substrate. Asp-254 serves as a coordination point for Zn(2+). Residues Arg-276, 291–293 (LSK), and Asn-297 contribute to the a 2'-deoxyribonucleoside 5'-triphosphate site. Residues Arg-305 and 309 to 314 (HKLVYT) each bind substrate. 2 residues coordinate a 2'-deoxyribonucleoside 5'-triphosphate: His-315 and Lys-316. Positions 380 and 384 each coordinate GTP.

The protein belongs to the SAMHD1 family. In terms of assembly, homodimer; in absence of GTP and dNTP. Homotetramer; in GTP- and dNTP-bound form. Zn(2+) serves as cofactor.

It carries out the reaction a 2'-deoxyribonucleoside 5'-triphosphate + H2O = a 2'-deoxyribonucleoside + triphosphate + H(+). With respect to regulation, allosterically activated and regulated via the combined actions of GTP and dNTPs (dATP, dGTP, dTTP and dCTP): Allosteric site 1 binds GTP, while allosteric site 2 binds dNTP. Allosteric activation promotes the formation of highly active homotetramers. In terms of biological role, has deoxynucleoside triphosphate (dNTPase) activity. This is Deoxynucleoside triphosphate triphosphohydrolase SAMHD1 homolog from Dictyostelium discoideum (Social amoeba).